Reading from the N-terminus, the 343-residue chain is MARVRVGVNGFGTIGKRVAEAIMLQPDMELVGVTKTKPDYTAKYAVSRGIPVYVPKESLEEFQAKGIEPAGTIEELLEKVDVIVDATPGGTGRKYKPLYEKAGVKMIFQGGEKADIAELSFSTLCNYEQALGKTSLRVVSCNTTGLLRAICSISRLAPVRRVRATIVRRAADPKEIKRGPVNAIKPDPVKTPSHHALDVKTVLPDLDIVTMAVVVPTTLMHVHIVYAELEKPVTREDVVATFESTPRILLADASYGLASTAELVEYARDLGRKRYDIPELIVWLDSIAVNGVEVMWMQAVHQEAIVVPENIDAIRAVAELAKTAEETIRITDERLGLLKGRIP.

NAD(+) is bound by residues 13 to 14 and glycine 111; that span reads TI. 140–142 contributes to the D-glyceraldehyde 3-phosphate binding site; that stretch reads SCN. Cysteine 141 serves as the catalytic Nucleophile. Arginine 169 is an NAD(+) binding site. D-glyceraldehyde 3-phosphate is bound at residue 195-196; the sequence is HA. An NAD(+)-binding site is contributed by glutamine 302.

Belongs to the glyceraldehyde-3-phosphate dehydrogenase family. As to quaternary structure, homotetramer.

It localises to the cytoplasm. It carries out the reaction D-glyceraldehyde 3-phosphate + phosphate + NADP(+) = (2R)-3-phospho-glyceroyl phosphate + NADPH + H(+). The enzyme catalyses D-glyceraldehyde 3-phosphate + phosphate + NAD(+) = (2R)-3-phospho-glyceroyl phosphate + NADH + H(+). The protein operates within carbohydrate degradation; glycolysis; pyruvate from D-glyceraldehyde 3-phosphate: step 1/5. This chain is Glyceraldehyde-3-phosphate dehydrogenase, found in Hyperthermus butylicus (strain DSM 5456 / JCM 9403 / PLM1-5).